Consider the following 79-residue polypeptide: Putative antitoxin VapB1 (79 aa).

Its function is as follows. Antitoxin component of a possible type II toxin-antitoxin (TA) system. The cognate toxin is VapC1. This is Putative antitoxin VapB1 (vapB1) from Mycobacterium tuberculosis (strain ATCC 25618 / H37Rv).